The following is a 403-amino-acid chain: Argininosuccinate synthase (403 aa).

ATP contacts are provided by residues 12–20 and A39; that span reads AYSGGLDTS. The L-citrulline site is built by Y90 and S95. G120 contributes to the ATP binding site. 3 residues coordinate L-aspartate: T122, N126, and D127. Residue N126 participates in L-citrulline binding. 5 residues coordinate L-citrulline: R130, S182, S191, E267, and Y279.

Belongs to the argininosuccinate synthase family. Type 1 subfamily. As to quaternary structure, homotetramer.

It is found in the cytoplasm. It carries out the reaction L-citrulline + L-aspartate + ATP = 2-(N(omega)-L-arginino)succinate + AMP + diphosphate + H(+). It functions in the pathway amino-acid biosynthesis; L-arginine biosynthesis; L-arginine from L-ornithine and carbamoyl phosphate: step 2/3. This chain is Argininosuccinate synthase, found in Vesicomyosocius okutanii subsp. Calyptogena okutanii (strain HA).